The following is a 336-amino-acid chain: uncharacterized protein (336 aa).

Residues K39 and Y166 each contribute to the NADP(+) site.

Belongs to the NAD(P)-dependent epimerase/dehydratase family. Dihydroflavonol-4-reductase subfamily.

The protein resides in the cytoplasm. The protein localises to the nucleus. This is an uncharacterized protein from Schizosaccharomyces pombe (strain 972 / ATCC 24843) (Fission yeast).